The following is a 228-amino-acid chain: Aspartate racemase (228 aa).

47–49 (DRT) is a binding site for substrate. The active-site Proton donor/acceptor is the C82. Residues 83–85 (NTA) and K164 contribute to the substrate site. C194 (proton donor/acceptor) is an active-site residue.

The protein belongs to the aspartate/glutamate racemases family. In terms of assembly, homodimer. The existence of the interchain disulfide bond seen in the crystal structures is uncertain, but disulfide bonds have been reported for cytoplasmic proteins from thermophiles.

The enzyme catalyses L-aspartate = D-aspartate. Its activity is regulated as follows. Weakly inhibited by citrate, but not by asparagine. The polypeptide is Aspartate racemase (Pyrococcus horikoshii (strain ATCC 700860 / DSM 12428 / JCM 9974 / NBRC 100139 / OT-3)).